We begin with the raw amino-acid sequence, 71 residues long: MPSIKVRENEPFDIALRRFRRICDRAGVITDVRKKEFFEKPTWVSKRMKAAAVKRTHKEMAKNRVYRKRMY.

This sequence belongs to the bacterial ribosomal protein bS21 family.

The protein is Small ribosomal subunit protein bS21 of Vesicomyosocius okutanii subsp. Calyptogena okutanii (strain HA).